The sequence spans 376 residues: Putative glutamate--cysteine ligase 2 (376 aa).

It belongs to the glutamate--cysteine ligase type 2 family. YbdK subfamily.

It catalyses the reaction L-cysteine + L-glutamate + ATP = gamma-L-glutamyl-L-cysteine + ADP + phosphate + H(+). In terms of biological role, ATP-dependent carboxylate-amine ligase which exhibits weak glutamate--cysteine ligase activity. The polypeptide is Putative glutamate--cysteine ligase 2 (Mycolicibacterium paratuberculosis (strain ATCC BAA-968 / K-10) (Mycobacterium paratuberculosis)).